A 98-amino-acid chain; its full sequence is NADH-ubiquinone oxidoreductase chain 4L (98 aa).

Transmembrane regions (helical) follow at residues 1-21 (MSLVYMNIMTAFMVSLAGLLM), 29-49 (SLLCLEGMMLSLFVMATLTIL), and 61-81 (IILLVFAACEAALGLSLLVMV).

It belongs to the complex I subunit 4L family. As to quaternary structure, core subunit of respiratory chain NADH dehydrogenase (Complex I) which is composed of 45 different subunits.

Its subcellular location is the mitochondrion inner membrane. It carries out the reaction a ubiquinone + NADH + 5 H(+)(in) = a ubiquinol + NAD(+) + 4 H(+)(out). In terms of biological role, core subunit of the mitochondrial membrane respiratory chain NADH dehydrogenase (Complex I) which catalyzes electron transfer from NADH through the respiratory chain, using ubiquinone as an electron acceptor. Part of the enzyme membrane arm which is embedded in the lipid bilayer and involved in proton translocation. The polypeptide is NADH-ubiquinone oxidoreductase chain 4L (MT-ND4L) (Rangifer tarandus (Reindeer)).